Consider the following 338-residue polypeptide: Holliday junction branch migration complex subunit RuvB (338 aa).

Residues 1 to 181 are large ATPase domain (RuvB-L); the sequence is MERAITPEKR…FGVISRLEFY (181 aa). ATP-binding positions include L20, R21, G62, K65, T66, T67, 128 to 130, R171, Y181, and R218; that span reads EDF. Mg(2+) is bound at residue T66. The interval 182-252 is small ATPAse domain (RuvB-S); that stretch reads THDELAFIVT…VVQETLRLLE (71 aa). Residues 255–338 form a head domain (RuvB-H) region; that stretch reads EMGFDQMDRM…TPERPQGSLF (84 aa). Residues R310 and R315 each contribute to the DNA site.

This sequence belongs to the RuvB family. Homohexamer. Forms an RuvA(8)-RuvB(12)-Holliday junction (HJ) complex. HJ DNA is sandwiched between 2 RuvA tetramers; dsDNA enters through RuvA and exits via RuvB. An RuvB hexamer assembles on each DNA strand where it exits the tetramer. Each RuvB hexamer is contacted by two RuvA subunits (via domain III) on 2 adjacent RuvB subunits; this complex drives branch migration. In the full resolvosome a probable DNA-RuvA(4)-RuvB(12)-RuvC(2) complex forms which resolves the HJ.

It is found in the cytoplasm. The catalysed reaction is ATP + H2O = ADP + phosphate + H(+). Its function is as follows. The RuvA-RuvB-RuvC complex processes Holliday junction (HJ) DNA during genetic recombination and DNA repair, while the RuvA-RuvB complex plays an important role in the rescue of blocked DNA replication forks via replication fork reversal (RFR). RuvA specifically binds to HJ cruciform DNA, conferring on it an open structure. The RuvB hexamer acts as an ATP-dependent pump, pulling dsDNA into and through the RuvAB complex. RuvB forms 2 homohexamers on either side of HJ DNA bound by 1 or 2 RuvA tetramers; 4 subunits per hexamer contact DNA at a time. Coordinated motions by a converter formed by DNA-disengaged RuvB subunits stimulates ATP hydrolysis and nucleotide exchange. Immobilization of the converter enables RuvB to convert the ATP-contained energy into a lever motion, pulling 2 nucleotides of DNA out of the RuvA tetramer per ATP hydrolyzed, thus driving DNA branch migration. The RuvB motors rotate together with the DNA substrate, which together with the progressing nucleotide cycle form the mechanistic basis for DNA recombination by continuous HJ branch migration. Branch migration allows RuvC to scan DNA until it finds its consensus sequence, where it cleaves and resolves cruciform DNA. The sequence is that of Holliday junction branch migration complex subunit RuvB from Trichlorobacter lovleyi (strain ATCC BAA-1151 / DSM 17278 / SZ) (Geobacter lovleyi).